A 346-amino-acid chain; its full sequence is Insertion element IS476 uncharacterized 39.2 kDa protein (346 aa).

The tract at residues 1–50 (MVSARPAFISGGPSTGGWRPTRQAAERTGGPEHSIEEVAGRGAPGHRSAE) is disordered. The segment covering 29–39 (GGPEHSIEEVA) has biased composition (basic and acidic residues). Residues 169 to 329 (ASSMPNDTWS…IPPAQFAANY (161 aa)) enclose the Integrase catalytic domain.

This Xanthomonas euvesicatoria protein is Insertion element IS476 uncharacterized 39.2 kDa protein.